Reading from the N-terminus, the 767-residue chain is Protein transport protein Sec23B (767 aa).

Position 2 is an N-acetylalanine (Ala2). Residues Cys61, Cys66, Cys85, and Cys88 each contribute to the Zn(2+) site. N6-acetyllysine is present on Lys564. The Gelsolin-like repeat unit spans residues 634–720; it reads PEPVLLDSSS…EHGGSQARFL (87 aa).

Belongs to the SEC23/SEC24 family. SEC23 subfamily. As to quaternary structure, COPII is composed of at least five proteins: the Sec23/24 complex, the Sec13/31 complex and Sar1. Interacts with SAR1A.

It is found in the cytoplasmic vesicle. The protein resides in the COPII-coated vesicle membrane. The protein localises to the endoplasmic reticulum membrane. It localises to the cytoplasm. Its subcellular location is the cytosol. Component of the coat protein complex II (COPII) which promotes the formation of transport vesicles from the endoplasmic reticulum (ER). The coat has two main functions, the physical deformation of the endoplasmic reticulum membrane into vesicles and the selection of cargo molecules for their transport to the Golgi complex. The polypeptide is Protein transport protein Sec23B (Mus musculus (Mouse)).